The chain runs to 350 residues: Phenylalanine--tRNA ligase alpha subunit (350 aa).

Glutamate 260 provides a ligand contact to Mg(2+).

It belongs to the class-II aminoacyl-tRNA synthetase family. Phe-tRNA synthetase alpha subunit type 1 subfamily. Tetramer of two alpha and two beta subunits. Mg(2+) serves as cofactor.

It is found in the cytoplasm. It catalyses the reaction tRNA(Phe) + L-phenylalanine + ATP = L-phenylalanyl-tRNA(Phe) + AMP + diphosphate + H(+). The chain is Phenylalanine--tRNA ligase alpha subunit from Mesoplasma florum (strain ATCC 33453 / NBRC 100688 / NCTC 11704 / L1) (Acholeplasma florum).